A 258-amino-acid chain; its full sequence is MKALISNDDGVNATGILAAKNAIEDLCEVCVVAPETQQSGIGHAITLYDPLRINPTTLRDKSQAYGVTGTPTDAVTFGLFEIMGEKPDIMISGINTGFNIGKAELTTSGTIGAALEAASFGIPSIAISQEVTRDYIKFENGTVDIDFSFAGKMLRKLVKIVFKKGLPDGIDLLNVNIPENPVDEEFEVAKLGNRMYTPIIQRRLDPRGKPYYWIGGDPYNSDCEGTDGHCLKKLNKATITPLTIDLTGEMDLIKEWLK.

Positions 8, 9, 39, and 95 each coordinate a divalent metal cation.

Belongs to the SurE nucleotidase family. The cofactor is a divalent metal cation.

The protein resides in the cytoplasm. The enzyme catalyses a ribonucleoside 5'-phosphate + H2O = a ribonucleoside + phosphate. Functionally, nucleotidase that shows phosphatase activity on nucleoside 5'-monophosphates. This Methanobrevibacter smithii (strain ATCC 35061 / DSM 861 / OCM 144 / PS) protein is 5'-nucleotidase SurE.